We begin with the raw amino-acid sequence, 750 residues long: Polyribonucleotide nucleotidyltransferase (750 aa).

Mg(2+) contacts are provided by aspartate 492 and aspartate 498. The 60-residue stretch at 559–618 folds into the KH domain; it reads PQLSVVEVNPEIIRVIIGPGGKNIKAITSATGASIDIEDSGRISIFAPTKESMDMAREMV. The region spanning 628–695 is the S1 motif domain; the sequence is GKNYTAKVRK…NDGRVRASRK (68 aa). The disordered stretch occupies residues 705–750; sequence EWDPADTARPPRKPRDRDDRGDRGGRGDRGDRGGRNGRGGDRRDRR. Basic and acidic residues predominate over residues 717–750; sequence KPRDRDDRGDRGGRGDRGDRGGRNGRGGDRRDRR.

It belongs to the polyribonucleotide nucleotidyltransferase family. Mg(2+) serves as cofactor.

Its subcellular location is the cytoplasm. It catalyses the reaction RNA(n+1) + phosphate = RNA(n) + a ribonucleoside 5'-diphosphate. Involved in mRNA degradation. Catalyzes the phosphorolysis of single-stranded polyribonucleotides processively in the 3'- to 5'-direction. The polypeptide is Polyribonucleotide nucleotidyltransferase (Oleidesulfovibrio alaskensis (strain ATCC BAA-1058 / DSM 17464 / G20) (Desulfovibrio alaskensis)).